The sequence spans 87 residues: Large ribosomal subunit protein bL31B (87 aa).

Belongs to the bacterial ribosomal protein bL31 family. Type B subfamily. In terms of assembly, part of the 50S ribosomal subunit.

In Salinispora arenicola (strain CNS-205), this protein is Large ribosomal subunit protein bL31B.